Reading from the N-terminus, the 93-residue chain is Integration host factor subunit beta (93 aa).

The protein belongs to the bacterial histone-like protein family. As to quaternary structure, heterodimer of an alpha and a beta chain.

In terms of biological role, this protein is one of the two subunits of integration host factor, a specific DNA-binding protein that functions in genetic recombination as well as in transcriptional and translational control. This chain is Integration host factor subunit beta, found in Idiomarina loihiensis (strain ATCC BAA-735 / DSM 15497 / L2-TR).